A 432-amino-acid polypeptide reads, in one-letter code: Glucose-6-phosphate isomerase (432 aa).

E283 (proton donor) is an active-site residue. Catalysis depends on residues H304 and K418.

It belongs to the GPI family.

It is found in the cytoplasm. The catalysed reaction is alpha-D-glucose 6-phosphate = beta-D-fructose 6-phosphate. It functions in the pathway carbohydrate biosynthesis; gluconeogenesis. It participates in carbohydrate degradation; glycolysis; D-glyceraldehyde 3-phosphate and glycerone phosphate from D-glucose: step 2/4. In terms of biological role, catalyzes the reversible isomerization of glucose-6-phosphate to fructose-6-phosphate. The sequence is that of Glucose-6-phosphate isomerase from Rubrobacter xylanophilus (strain DSM 9941 / JCM 11954 / NBRC 16129 / PRD-1).